A 436-amino-acid chain; its full sequence is Phosphoribosylamine--glycine ligase (436 aa).

The ATP-grasp domain maps to 106–318 (RKLFEDYDIE…LADVCQAIVD (213 aa)). 133 to 196 (LDDFDRDVVV…EERLIGEEFT (64 aa)) contributes to the ATP binding site. Mg(2+)-binding residues include Q276, E288, and N290. Residues Q276, E288, and N290 each contribute to the Mn(2+) site.

The protein belongs to the GARS family. The cofactor is Mg(2+). Mn(2+) serves as cofactor.

The catalysed reaction is 5-phospho-beta-D-ribosylamine + glycine + ATP = N(1)-(5-phospho-beta-D-ribosyl)glycinamide + ADP + phosphate + H(+). It participates in purine metabolism; IMP biosynthesis via de novo pathway; N(1)-(5-phospho-D-ribosyl)glycinamide from 5-phospho-alpha-D-ribose 1-diphosphate: step 2/2. This chain is Phosphoribosylamine--glycine ligase, found in Methanobrevibacter smithii (strain ATCC 35061 / DSM 861 / OCM 144 / PS).